The primary structure comprises 338 residues: 4-hydroxy-3-methylbut-2-enyl diphosphate reductase (338 aa).

Cys-21 contacts [4Fe-4S] cluster. Residues His-50 and His-83 each contribute to the (2E)-4-hydroxy-3-methylbut-2-enyl diphosphate site. The dimethylallyl diphosphate site is built by His-50 and His-83. The isopentenyl diphosphate site is built by His-50 and His-83. Cys-105 serves as a coordination point for [4Fe-4S] cluster. His-133 provides a ligand contact to (2E)-4-hydroxy-3-methylbut-2-enyl diphosphate. Position 133 (His-133) interacts with dimethylallyl diphosphate. His-133 is a binding site for isopentenyl diphosphate. Glu-135 serves as the catalytic Proton donor. Thr-173 is a (2E)-4-hydroxy-3-methylbut-2-enyl diphosphate binding site. Cys-203 provides a ligand contact to [4Fe-4S] cluster. The (2E)-4-hydroxy-3-methylbut-2-enyl diphosphate site is built by Ser-231, Ser-232, Asn-233, and Ser-276. 4 residues coordinate dimethylallyl diphosphate: Ser-231, Ser-232, Asn-233, and Ser-276. 4 residues coordinate isopentenyl diphosphate: Ser-231, Ser-232, Asn-233, and Ser-276.

Belongs to the IspH family. The cofactor is [4Fe-4S] cluster.

It carries out the reaction isopentenyl diphosphate + 2 oxidized [2Fe-2S]-[ferredoxin] + H2O = (2E)-4-hydroxy-3-methylbut-2-enyl diphosphate + 2 reduced [2Fe-2S]-[ferredoxin] + 2 H(+). It catalyses the reaction dimethylallyl diphosphate + 2 oxidized [2Fe-2S]-[ferredoxin] + H2O = (2E)-4-hydroxy-3-methylbut-2-enyl diphosphate + 2 reduced [2Fe-2S]-[ferredoxin] + 2 H(+). It participates in isoprenoid biosynthesis; dimethylallyl diphosphate biosynthesis; dimethylallyl diphosphate from (2E)-4-hydroxy-3-methylbutenyl diphosphate: step 1/1. The protein operates within isoprenoid biosynthesis; isopentenyl diphosphate biosynthesis via DXP pathway; isopentenyl diphosphate from 1-deoxy-D-xylulose 5-phosphate: step 6/6. Catalyzes the conversion of 1-hydroxy-2-methyl-2-(E)-butenyl 4-diphosphate (HMBPP) into a mixture of isopentenyl diphosphate (IPP) and dimethylallyl diphosphate (DMAPP). Acts in the terminal step of the DOXP/MEP pathway for isoprenoid precursor biosynthesis. The chain is 4-hydroxy-3-methylbut-2-enyl diphosphate reductase from Streptomyces avermitilis (strain ATCC 31267 / DSM 46492 / JCM 5070 / NBRC 14893 / NCIMB 12804 / NRRL 8165 / MA-4680).